A 427-amino-acid chain; its full sequence is Peptidase B (427 aa).

Mn(2+)-binding residues include Lys-195 and Asp-200. The active site involves Lys-207. Asp-218, Asp-277, and Glu-279 together coordinate Mn(2+). Arg-281 is a catalytic residue.

It belongs to the peptidase M17 family. Homohexamer. It depends on Mn(2+) as a cofactor.

The protein resides in the cytoplasm. The catalysed reaction is Release of an N-terminal amino acid, Xaa, from a peptide or arylamide. Xaa is preferably Glu or Asp but may be other amino acids, including Leu, Met, His, Cys and Gln.. Probably plays an important role in intracellular peptide degradation. The sequence is that of Peptidase B from Citrobacter koseri (strain ATCC BAA-895 / CDC 4225-83 / SGSC4696).